The primary structure comprises 85 residues: Small ribosomal subunit protein uS17 (85 aa).

This sequence belongs to the universal ribosomal protein uS17 family. As to quaternary structure, part of the 30S ribosomal subunit.

In terms of biological role, one of the primary rRNA binding proteins, it binds specifically to the 5'-end of 16S ribosomal RNA. This chain is Small ribosomal subunit protein uS17, found in Desulfosudis oleivorans (strain DSM 6200 / JCM 39069 / Hxd3) (Desulfococcus oleovorans).